Reading from the N-terminus, the 406-residue chain is Kelch domain-containing protein 2 (406 aa).

Kelch repeat units lie at residues 31 to 85, 92 to 136, 148 to 207, 221 to 259, 271 to 311, and 322 to 359; these read ERSG…NTEG, SGSC…ERID, LGVW…IWSQ, HACATVGNKGFVFGGRYRDARMNDLHYLNLDTWEWNELI, HSLT…IKFN, and HTACASDEGEVIVFGGCANNLLVHHRAAHSNEILIFSV.

As to quaternary structure, component of a CRL2(KLHDC2) E3 ubiquitin-protein ligase complex, also named ECS(KLHDC2) complex, composed of CUL2, Elongin BC (ELOB and ELOC), RBX1 and substrate-specific adapter KLHDC2. May form oligomers as a KLHDC2-ELOB-ELOC complex; this interaction is autoinhibitory for the E3 ligase complex as the substrate-binding site of KLHDC2 is blocked in the oligomer. Interacts with CREB3; interaction is direct and specific as it does not interact with CREB1, ATF4, ATF6, JUN, FOS, CEBPA or herpes simplex virus transactivator VP16. Post-translationally, autoubiquitinated by the CRL2(KLHDC2) E3 ligase complex.

It is found in the nucleus. The protein operates within protein modification; protein ubiquitination. Functionally, substrate-recognition component of a Cul2-RING (CRL2) E3 ubiquitin-protein ligase complex of the DesCEND (destruction via C-end degrons) pathway, which recognizes a C-degron located at the extreme C terminus of target proteins, leading to their ubiquitination and degradation. The C-degron recognized by the DesCEND pathway is usually a motif of less than ten residues and can be present in full-length proteins, truncated proteins or proteolytically cleaved forms. The CRL2(KLHDC2) complex specifically recognizes proteins with a diglycine (Gly-Gly) at the C-terminus, leading to their ubiquitination and degradation. The CRL2(KLHDC2) complex mediates ubiquitination and degradation of truncated SELENOK and SELENOS selenoproteins produced by failed UGA/Sec decoding, which end with a diglycine. The CRL2(KLHDC2) complex also recognizes proteolytically cleaved proteins ending with Gly-Gly, such as the N-terminal fragment of USP1, leading to their degradation. May also act as an indirect repressor of CREB3-mediated transcription by interfering with CREB3-DNA-binding. This chain is Kelch domain-containing protein 2, found in Bos taurus (Bovine).